The primary structure comprises 291 residues: Small ribosomal subunit biogenesis GTPase RsgA (291 aa).

Residues 63 to 221 (NNELKRPPVS…IADTPGFSAL (159 aa)) enclose the CP-type G domain. GTP is bound by residues 112–115 (TKHD) and 164–172 (GQSGVGKST). Zn(2+)-binding residues include Cys-245, Cys-250, His-252, and Cys-258.

Belongs to the TRAFAC class YlqF/YawG GTPase family. RsgA subfamily. Monomer. Associates with 30S ribosomal subunit, binds 16S rRNA. Zn(2+) is required as a cofactor.

It is found in the cytoplasm. Its function is as follows. One of several proteins that assist in the late maturation steps of the functional core of the 30S ribosomal subunit. Helps release RbfA from mature subunits. May play a role in the assembly of ribosomal proteins into the subunit. Circularly permuted GTPase that catalyzes slow GTP hydrolysis, GTPase activity is stimulated by the 30S ribosomal subunit. The chain is Small ribosomal subunit biogenesis GTPase RsgA from Staphylococcus epidermidis (strain ATCC 12228 / FDA PCI 1200).